The following is a 456-amino-acid chain: Cell cycle checkpoint control protein Rad9 (456 aa).

Residues Lys300 to Lys302 carry the Nuclear localization signal motif.

The protein belongs to the rad9 family. As to quaternary structure, component of the 9-1-1 checkpoint clamp complex consisting of Rad9 isoform A, Rad1 and Hus1-like; the interaction with Hus1-like is direct. Does not interact directly with Rad1; this interaction is probably mediated by Hus1-like. This complex probably also forms with Rad9 isoform B, however 9-1-1 complex containing Rad9 isoform A localizes to the nuclear periphery. Interacts with Brca2. Expressed in ovary.

The protein resides in the nucleus envelope. It is found in the nucleus. Its function is as follows. Component of the Rad9-Rad1-Hus1 (9-1-1) checkpoint clamp complex. Functionally, targets the 9-1-1 complex to the nuclear periphery. Targeting to the nuclear periphery is disrupted in the presence of persistent double stranded break DNA damage, possibly as a function of the meiotic checkpoint. The protein is Cell cycle checkpoint control protein Rad9 of Drosophila melanogaster (Fruit fly).